A 471-amino-acid polypeptide reads, in one-letter code: Chromosomal replication initiator protein DnaA (471 aa).

The tract at residues 1-91 is domain I, interacts with DnaA modulators; the sequence is MVDVSETTER…KYWQDESDAV (91 aa). Residues 91-133 are domain II; the sequence is VYSVDICVSDGVGVQPQMAEHPDGAVDGPPVVMVGGTYDHLSS. The domain III, AAA+ region stretch occupies residues 134 to 352; the sequence is PLDPRFTFDN…GALNKVVAHS (219 aa). ATP is bound by residues Gly180, Gly182, Lys183, and Thr184. Residues 353–471 are domain IV, binds dsDNA; the sequence is SLVGRSVTIE…DINLLIRMLR (119 aa).

The protein belongs to the DnaA family. In terms of assembly, oligomerizes as a right-handed, spiral filament on DNA at oriC.

Its subcellular location is the cytoplasm. Its function is as follows. Plays an essential role in the initiation and regulation of chromosomal replication. ATP-DnaA binds to the origin of replication (oriC) to initiate formation of the DNA replication initiation complex once per cell cycle. Binds the DnaA box (a 9 base pair repeat at the origin) and separates the double-stranded (ds)DNA. Forms a right-handed helical filament on oriC DNA; dsDNA binds to the exterior of the filament while single-stranded (ss)DNA is stabiized in the filament's interior. The ATP-DnaA-oriC complex binds and stabilizes one strand of the AT-rich DNA unwinding element (DUE), permitting loading of DNA polymerase. After initiation quickly degrades to an ADP-DnaA complex that is not apt for DNA replication. Binds acidic phospholipids. In Anaplasma marginale (strain St. Maries), this protein is Chromosomal replication initiator protein DnaA.